A 123-amino-acid chain; its full sequence is Small ribosomal subunit protein uS17 (123 aa).

The protein belongs to the universal ribosomal protein uS17 family. Part of the 30S ribosomal subunit.

Functionally, one of the primary rRNA binding proteins, it binds specifically to the 5'-end of 16S ribosomal RNA. The chain is Small ribosomal subunit protein uS17 from Pyrobaculum aerophilum (strain ATCC 51768 / DSM 7523 / JCM 9630 / CIP 104966 / NBRC 100827 / IM2).